A 292-amino-acid polypeptide reads, in one-letter code: UPF0696 protein C11orf68 homolog (292 aa).

Positions 1–10 (MAAAAAAVAG) are enriched in low complexity. Residues 1 to 60 (MAAAAAAVAGAGRGGGGGADPGQERSRARSWVGAERSEGRRMEPNEELEEEDSPGGREDG) form a disordered region. A compositionally biased stretch (gly residues) spans 11–20 (AGRGGGGGAD). Residues 35–44 (ERSEGRRMEP) show a composition bias toward basic and acidic residues.

The protein belongs to the UPF0696 family.

In Rattus norvegicus (Rat), this protein is UPF0696 protein C11orf68 homolog (Bles03).